The chain runs to 4085 residues: Replicase polyprotein 1a (4085 aa).

In terms of domain architecture, CoV Nsp1 globular spans 2 to 109 (ACNRVTLAVA…EFDVVFGKRG (108 aa)). One can recognise a CoV Nsp2 N-terminal domain in the interval 113–359 (VTYTDQYLCG…RNSVTDECRL (247 aa)). Positions 246, 248, 265, and 266 each coordinate Zn(2+). A C4 region spans residues 246–266 (CTCGTKSWSVGDWTGFKSSCC). One can recognise a CoV Nsp2 middle domain in the interval 389 to 775 (YDDIFAESKP…LEAYNAFLDT (387 aa)). The CoV Nsp2 C-terminal domain maps to 773–897 (LDTVVSTVKI…LPVAFTKAAG (125 aa)). A Ubiquitin-like 1 domain is found at 898–993 (GKVSFSDDVE…VMISEWPLSV (96 aa)). The region spanning 1016–1268 (VNSIFDIETV…DTTPKEEFVV (253 aa)) is the Peptidase C16 1 domain. Cysteine 1054 serves as the catalytic For PL1-PRO activity. Residues 1126-1157 (CSCTSGRLEESGAVLFCTPTKKAFPYGTCLNC) form a C4-type 1; degenerate zinc finger. Residues histidine 1205 and aspartate 1218 each act as for PL1-PRO activity in the active site. Positions 1269–1436 (KEKLNAFLVH…KVKDFVSGLV (168 aa)) constitute a Macro domain. One can recognise a Ubiquitin-like 2 domain in the interval 1600–1655 (AKVITIKVTEDGVNVHDVTVTTDKSFEQQVGVIADKDKDLSGAVPSDLNTSELLTK). Positions 1663 to 1914 (EFYGFKDAVT…TVKPKPVINQ (252 aa)) constitute a Peptidase C16 2 domain. The active-site For PL2-PRO activity is the cysteine 1701. Positions 1780, 1783, 1813, and 1815 each coordinate Zn(2+). The C4-type 2; atypical zinc-finger motif lies at 1780–1815 (CVECDAKFKNSVASINSAIVCASVKRDGVQVGYCVH). Active-site for PL2-PRO activity residues include histidine 1863 and aspartate 1868. Positions 1925–2115 (FGDFLIHNFV…STVGVFLGYK (191 aa)) are HD1. The helical transmembrane segment at 1998–2018 (LLLLIYTLYSVVLLCVRFGPF) threads the bilayer. In terms of domain architecture, 3Ecto spans 2005–2070 (LYSVVLLCVR…LDVVWKHITD (66 aa)). Cystine bridges form between cysteine 2021/cysteine 2048 and cysteine 2039/cysteine 2045. 2 helical membrane-spanning segments follow: residues 2068–2088 (ITDP…LLIF) and 2095–2115 (CFLL…LGYK). The segment at 2144 to 2234 (SFVRHVLFGC…ITKTNVQPTG (91 aa)) is Y1. Positions 2144–2483 (SFVRHVLFGC…PATSIVAKQG (340 aa)) constitute a CoV Nsp3 Y domain. Residues histidine 2148, cysteine 2153, cysteine 2158, cysteine 2161, cysteine 2194, histidine 2197, cysteine 2201, and cysteine 2204 each contribute to the Zn(2+) site. Positions 2148–2161 (HVLFGCENPDCIAC) are ZF1. The interval 2194 to 2204 (CKKHRFFCVDC) is ZF2. The segment at 2235–2324 (PAYVMIDKVE…LVDSELLSTL (90 aa)) is Y2. Residues 2235 to 2483 (PAYVMIDKVE…PATSIVAKQG (249 aa)) are coV-Y. The tract at residues 2325–2381 (SVDFNGVLHKAYIDVLRNSFGKDLNANMSLAECKRALGLSISDHEFTSAISNAHRCD) is Y3. The Y4 stretch occupies residues 2382-2483 (VLLSDLSFNN…PATSIVAKQG (102 aa)). 6 helical membrane passes run 2491–2511 (LTWL…LCFF), 2731–2751 (LWNL…VAAM), 2755–2775 (ILLN…VTKF), 2782–2802 (LSVG…SYIV), 2809–2829 (MIAY…AWIW), and 2834–2854 (LIAY…LAML). Positions 2491–2854 (LTWLWLLCGL…LCAWYFLAML (364 aa)) are HD2. The Nsp4C domain maps to 2870–2965 (LFEGDKFVGT…PTVSYGSTLQ (96 aa)). Residues 2966–3267 (AGLRKMAQPS…VKQMFGVNLQ (302 aa)) enclose the Peptidase C30 domain. Catalysis depends on for 3CL-PRO activity residues histidine 3006 and cysteine 3109. 7 helical membrane passes run 3281–3301 (FAGF…TIWV), 3304–3324 (GFLT…TFVV), 3328–3348 (VLFL…QNCA), 3367–3387 (VMQM…VALL), 3401–3421 (CTYL…YDYV), 3422–3442 (SLLV…AIIF), and 3467–3487 (LLFY…LYWI). The segment at 3281–3487 (FAGFFVMFWA…CMYYGLLYWI (207 aa)) is HD3. In terms of domain architecture, RdRp Nsp7 cofactor spans 3547–3629 (SKLTDLKCTN…SYFENDSILQ (83 aa)). The RdRp Nsp8 cofactor domain occupies 3630–3824 (SVASSFVGMP…LTCERVVKLQ (195 aa)). Residues 3825-3933 (NNEIMPGKMK…GYIGATVRLQ (109 aa)) form the Nsp9 ssRNA-binding domain. The region spanning 3934 to 4072 (AGKQTEFVSN…DRTAIQSFDN (139 aa)) is the ExoN/MTase coactivator domain. 8 residues coordinate Zn(2+): cysteine 4007, cysteine 4010, histidine 4016, cysteine 4023, cysteine 4049, cysteine 4052, cysteine 4060, and cysteine 4062. 2 zinc fingers span residues 4007–4023 (CIYC…DGFC) and 4049–4062 (CKVC…GCTC).

The protein belongs to the coronaviruses polyprotein 1ab family. 3CL-PRO exists as monomer and homodimer. Eight copies of nsp7 and eight copies of nsp8 assemble to form a heterohexadecamer. Nsp9 is a dimer. Nsp10 forms a dodecamer. In terms of processing, specific enzymatic cleavages in vivo by its own proteases yield mature proteins. 3CL-PRO and PL-PRO proteinases are autocatalytically processed.

The protein localises to the host membrane. The protein resides in the host cytoplasm. It localises to the host perinuclear region. It carries out the reaction Thiol-dependent hydrolysis of ester, thioester, amide, peptide and isopeptide bonds formed by the C-terminal Gly of ubiquitin (a 76-residue protein attached to proteins as an intracellular targeting signal).. Its function is as follows. The papain-like proteinase 1 (PLP1) and papain-like proteinase 2 (PLP2) are responsible for the cleavages located at the N-terminus of the replicase polyprotein. In addition, PLP2 possesses a deubiquitinating/deISGylating activity and processes both 'Lys-48'- and 'Lys-63'-linked polyubiquitin chains from cellular substrates. PLP2 also antagonizes innate immune induction of type I interferon by blocking the nuclear translocation of host IRF-3. Functionally, responsible for the majority of cleavages as it cleaves the C-terminus of replicase polyprotein at 11 sites. Recognizes substrates containing the core sequence [ILMVF]-Q-|-[SGACN]. Inhibited by the substrate-analog Cbz-Val-Asn-Ser-Thr-Leu-Gln-CMK. Also contains an ADP-ribose-1''-phosphate (ADRP)-binding function. In terms of biological role, nsp7-nsp8 hexadecamer may possibly confer processivity to the polymerase, maybe by binding to dsRNA or by producing primers utilized by the latter. Nsp9 is a ssRNA-binding protein. The protein is Replicase polyprotein 1a of Homo sapiens (Human).